A 218-amino-acid polypeptide reads, in one-letter code: Ribose-5-phosphate isomerase A (218 aa).

Residues Thr28–Thr31, Asp81–Asp84, and Lys94–Gly97 contribute to the substrate site. Glu103 acts as the Proton acceptor in catalysis. Residue Lys121 participates in substrate binding.

It belongs to the ribose 5-phosphate isomerase family. In terms of assembly, homodimer.

The catalysed reaction is aldehydo-D-ribose 5-phosphate = D-ribulose 5-phosphate. It functions in the pathway carbohydrate degradation; pentose phosphate pathway; D-ribose 5-phosphate from D-ribulose 5-phosphate (non-oxidative stage): step 1/1. Functionally, catalyzes the reversible conversion of ribose-5-phosphate to ribulose 5-phosphate. This Yersinia pseudotuberculosis serotype IB (strain PB1/+) protein is Ribose-5-phosphate isomerase A.